The sequence spans 410 residues: Peptidase T (410 aa).

Zn(2+) is bound at residue His-79. The active site involves Asp-81. Asp-142 serves as a coordination point for Zn(2+). The Proton acceptor role is filled by Glu-176. The Zn(2+) site is built by Glu-177, Asp-199, and His-381.

This sequence belongs to the peptidase M20B family. Zn(2+) is required as a cofactor.

Its subcellular location is the cytoplasm. The catalysed reaction is Release of the N-terminal residue from a tripeptide.. Functionally, cleaves the N-terminal amino acid of tripeptides. This Bacillus cereus (strain ATCC 10987 / NRS 248) protein is Peptidase T.